Here is a 144-residue protein sequence, read N- to C-terminus: Nucleoside diphosphate kinase (144 aa).

K11, F59, R87, T93, R104, and N114 together coordinate ATP. The Pros-phosphohistidine intermediate role is filled by H117.

This sequence belongs to the NDK family. In terms of assembly, homotetramer. Mg(2+) serves as cofactor.

Its subcellular location is the cytoplasm. The catalysed reaction is a 2'-deoxyribonucleoside 5'-diphosphate + ATP = a 2'-deoxyribonucleoside 5'-triphosphate + ADP. The enzyme catalyses a ribonucleoside 5'-diphosphate + ATP = a ribonucleoside 5'-triphosphate + ADP. Its function is as follows. Major role in the synthesis of nucleoside triphosphates other than ATP. The ATP gamma phosphate is transferred to the NDP beta phosphate via a ping-pong mechanism, using a phosphorylated active-site intermediate. The protein is Nucleoside diphosphate kinase of Vibrio atlanticus (strain LGP32) (Vibrio splendidus (strain Mel32)).